We begin with the raw amino-acid sequence, 428 residues long: MFIDQVKIYVKGGDGGNGMVAYRREKYVPKGGPAGGDGGKGADVVFIVEEGLRTLMDFRYQRHFKADRGQHGMSKGQHGRKSEDLLVKVPPGTVVKDEKTGQILADLVTHGQTAVIAKGGRGGRGNSRFATATNPAPEIAENGEPGQERDVILELKVLADVGLVGFPSVGKSTLLSVVSSARPKIAEYHFTTIVPNLGVVETGDNRSFVMADLPGLIEGAHAGVGLGHQFLRHIERTRVIVHVIDMSGLEGRDPYEDYVTINNELKEYNLRLTERPQVVVANKMDMPDAEENLQAFKEKVGDEVKIFPISAVTKQGVRDLLFEVANLIETTPEFPIHEVVDESDTSVMYKFETEGVKFDITRESDGTFVISGYDIEKTFKMTDFSRDESVRRFARQMRGMGIDEALRARGAKDGDIVKILEYEFEFID.

The Obg domain occupies 1 to 158 (MFIDQVKIYV…RDVILELKVL (158 aa)). Positions 159–329 (ADVGLVGFPS…LLFEVANLIE (171 aa)) constitute an OBG-type G domain. GTP-binding positions include 165 to 172 (GFPSVGKS), 190 to 194 (FTTIV), 212 to 215 (DLPG), 282 to 285 (NKMD), and 310 to 312 (SAV). Serine 172 and threonine 192 together coordinate Mg(2+). Residues 350–428 (KFETEGVKFD…ILEYEFEFID (79 aa)) enclose the OCT domain.

It belongs to the TRAFAC class OBG-HflX-like GTPase superfamily. OBG GTPase family. Monomer. It depends on Mg(2+) as a cofactor.

The protein resides in the cytoplasm. Its function is as follows. An essential GTPase which binds GTP, GDP and possibly (p)ppGpp with moderate affinity, with high nucleotide exchange rates and a fairly low GTP hydrolysis rate. Plays a role in control of the cell cycle, stress response, ribosome biogenesis and in those bacteria that undergo differentiation, in morphogenesis control. The polypeptide is GTPase Obg (Bacillus anthracis).